Reading from the N-terminus, the 211-residue chain is Ribonuclease T (211 aa).

An Exonuclease domain is found at 24-198; it reads VVVDVETGGF…YDAEKTAHLF (175 aa). 4 residues coordinate Mg(2+): D27, E29, H185, and D190. H185 functions as the Proton donor/acceptor in the catalytic mechanism.

The protein belongs to the RNase T family. Homodimer. The cofactor is Mg(2+).

Its function is as follows. Trims short 3' overhangs of a variety of RNA species, leaving a one or two nucleotide 3' overhang. Responsible for the end-turnover of tRNA: specifically removes the terminal AMP residue from uncharged tRNA (tRNA-C-C-A). Also appears to be involved in tRNA biosynthesis. This chain is Ribonuclease T, found in Xylella fastidiosa (strain Temecula1 / ATCC 700964).